The sequence spans 1191 residues: DNA-directed RNA polymerase subunit beta (1191 aa).

The segment covering Arg-1171–Ala-1181 has biased composition (basic and acidic residues). The interval Arg-1171–Asp-1191 is disordered. Low complexity predominate over residues Glu-1182–Asp-1191.

It belongs to the RNA polymerase beta chain family. In terms of assembly, the RNAP catalytic core consists of 2 alpha, 1 beta, 1 beta' and 1 omega subunit. When a sigma factor is associated with the core the holoenzyme is formed, which can initiate transcription.

The catalysed reaction is RNA(n) + a ribonucleoside 5'-triphosphate = RNA(n+1) + diphosphate. DNA-dependent RNA polymerase catalyzes the transcription of DNA into RNA using the four ribonucleoside triphosphates as substrates. The sequence is that of DNA-directed RNA polymerase subunit beta from Streptococcus agalactiae serotype Ia (strain ATCC 27591 / A909 / CDC SS700).